A 311-amino-acid polypeptide reads, in one-letter code: Delta(1)-pyrroline-2-carboxylate/Delta(1)-piperideine-2-carboxylate reductase (311 aa).

This sequence belongs to the ornithine cyclodeaminase/mu-crystallin family. Homodimer.

It carries out the reaction L-pipecolate + NAD(+) = Delta(1)-piperideine-2-carboxylate + NADH + H(+). It catalyses the reaction L-pipecolate + NADP(+) = Delta(1)-piperideine-2-carboxylate + NADPH + H(+). The catalysed reaction is L-proline + NAD(+) = 1-pyrroline-2-carboxylate + NADH + H(+). The enzyme catalyses L-proline + NADP(+) = 1-pyrroline-2-carboxylate + NADPH + H(+). Its pathway is amino-acid degradation. Catalyzes the reduction of both Delta(1)-pyrroline-2-carboxylate (Pyr2C) and Delta(1)-piperideine-2-carboxylate (Pip2C) to L-proline and L-pipecolate, respectively, using NADPH or NADH as the electron donor. Can also catalyze the reverse oxidation reactions, albeit at a much lower rate. Together with LhpH, is involved in a trans-3-hydroxy-L-proline (t3LHyp) degradation pathway to L-proline, which allows A.brasilense to grow on t3LHyp as a sole carbon source. Also appears to be involved in D-proline and D-lysine metabolism. Does not show ornithine cyclodeaminase (OCD) activity. The polypeptide is Delta(1)-pyrroline-2-carboxylate/Delta(1)-piperideine-2-carboxylate reductase (Azospirillum brasilense).